The primary structure comprises 376 residues: GTPase Obg (376 aa).

The region spanning 1-158 (MFIDSVNLTL…RDVRLELKLI (158 aa)) is the Obg domain. The region spanning 159 to 359 (ADVGLVGFPN…LKFSLLELLK (201 aa)) is the OBG-type G domain. GTP is bound by residues 165–172 (GFPNVGKS), 190–194 (FTTLT), 212–215 (DIPG), 280–283 (TRMD), and 340–342 (SSA). 2 residues coordinate Mg(2+): Ser-172 and Thr-192.

This sequence belongs to the TRAFAC class OBG-HflX-like GTPase superfamily. OBG GTPase family. In terms of assembly, monomer. The cofactor is Mg(2+).

It is found in the cytoplasm. In terms of biological role, an essential GTPase which binds GTP, GDP and possibly (p)ppGpp with moderate affinity, with high nucleotide exchange rates and a fairly low GTP hydrolysis rate. Plays a role in control of the cell cycle, stress response, ribosome biogenesis and in those bacteria that undergo differentiation, in morphogenesis control. The polypeptide is GTPase Obg (Campylobacter curvus (strain 525.92)).